A 115-amino-acid polypeptide reads, in one-letter code: Biotrophy-associated secreted protein 1 (115 aa).

The first 22 residues, 1–22, serve as a signal peptide directing secretion; it reads MHVFNFAALFTVLATFTATAAA. Residues 24-115 form a disordered region; it reads DQGSNTFDQR…GIRRVENYYP (92 aa). 2 stretches are compositionally biased toward basic and acidic residues: residues 46 to 55 and 91 to 115; these read IREEKQENVG and QQKE…NYYP.

It localises to the secreted. The protein resides in the host cytoplasm. Secreted effector involved in biotrophic colonization of plant cells. Induces an early, basal defense response in susceptible rice, including rapid callose deposition and ROS production in leaves and calli. Also promotes sporulation and mycelia growth suggesting a role across the whole process of interaction, from the biotrophic phase to sporulation. This is Biotrophy-associated secreted protein 1 from Pyricularia oryzae (strain 70-15 / ATCC MYA-4617 / FGSC 8958) (Rice blast fungus).